The chain runs to 902 residues: Glutamate receptor 4 (902 aa).

The signal sequence occupies residues 1 to 20; sequence MRIISRQIVLLFSGFWGLAM. Residues 22-544 lie on the Extracellular side of the membrane; that stretch reads AFPSSVQIGG…GVFSFLDPLA (523 aa). N-linked (GlcNAc...) asparagine glycans are attached at residues Asn52, Asn56, Asn258, Asn371, Asn407, and Asn414. A disulfide bridge links Cys84 with Cys331. Residues Pro500, Thr502, and Arg507 each coordinate L-glutamate. The chain crosses the membrane as a helical span at residues 545-565; the sequence is YEIWMCIVFAYIGVSVVLFLV. Residues 566–592 are Cytoplasmic-facing; sequence SRFSPYEWHTEEPEDGKEGPSDQPPNE. The helical; Pore-forming intramembrane region spans 593 to 608; the sequence is FGIFNSLWFSLGAFMQ. An intramembrane segment occupies 609–611; it reads QGC. A lipid anchor (S-palmitoyl cysteine) is attached at Cys611. At 612–617 the chain is on the cytoplasmic side; it reads DISPRS. Residues 618–638 form a helical membrane-spanning segment; the sequence is LSGRIVGGVWWFFTLIIISSY. Residues 639–813 lie on the Extracellular side of the membrane; that stretch reads TANLAAFLTV…DKTSALSLSN (175 aa). The L-glutamate site is built by Ser676, Thr677, and Glu727. A disulfide bond links Cys740 and Cys795. Residues 814–834 form a helical membrane-spanning segment; that stretch reads VAGVFYILVGGLGLAMLVALI. Over 835-902 the chain is Cytoplasmic; the sequence is EFCYKSRAEA…GLAVIASDLP (68 aa). The S-palmitoyl cysteine moiety is linked to residue Cys837. Ser862 bears the Phosphoserine; by PKC/PRKCG mark.

The protein belongs to the glutamate-gated ion channel (TC 1.A.10.1) family. GRIA4 subfamily. As to quaternary structure, homotetramer or heterotetramer of pore-forming glutamate receptor subunits. Tetramers may be formed by the dimerization of dimers. Interacts with EPB41L1 via its C-terminus. Isoform 3 interacts with PICK1. Found in a complex with GRIA1, GRIA2, GRIA3, CNIH2, CNIH3, CACNG2, CACNG3, CACNG4, CACNG5, CACNG7 and CACNG8. Interacts with CACNG5 and PRKCG. Found in a complex with GRIA1, GRIA2, GRIA3, DLG4, CACNG8 and CNIH2. Palmitoylated. Depalmitoylated upon L-glutamate stimulation. ZDHHC3/GODZ specifically palmitoylates Cys-611, which leads to Golgi retention and decreased cell surface expression. In contrast, Cys-837 palmitoylation does not affect cell surface expression but regulates stimulation-dependent endocytosis. Post-translationally, phosphorylated at Ser-862 by PRKCG; phosphorylation increases plasma membrane-associated GRI4 expression.

It is found in the cell membrane. The protein localises to the postsynaptic cell membrane. Its subcellular location is the cell projection. The protein resides in the dendrite. It catalyses the reaction Ca(2+)(in) = Ca(2+)(out). It carries out the reaction Na(+)(in) = Na(+)(out). The enzyme catalyses Mg(2+)(in) = Mg(2+)(out). In terms of biological role, ionotropic glutamate receptor that functions as a ligand-gated cation channel, gated by L-glutamate and glutamatergic agonists such as alpha-amino-3-hydroxy-5-methyl-4-isoxazolepropionic acid (AMPA), quisqualic acid, and kainic acid. L-glutamate acts as an excitatory neurotransmitter at many synapses in the central nervous system and plays an important role in fast excitatory synaptic transmission. Binding of the excitatory neurotransmitter L-glutamate induces a conformation change, leading to the opening of the cation channel, and thereby converts the chemical signal to an electrical impulse upon entry of monovalent and divalent cations such as sodium and calcium. The receptor then desensitizes rapidly and enters a transient inactive state, characterized by the presence of bound agonist. In the presence of CACNG8, shows resensitization which is characterized by a delayed accumulation of current flux upon continued application of L-glutamate. The protein is Glutamate receptor 4 of Macaca fascicularis (Crab-eating macaque).